A 355-amino-acid polypeptide reads, in one-letter code: Phosphatidylinositol:ceramide inositolphosphotransferase (355 aa).

Residues 1–44 (MISYPFFSLSPPGLVPPPMAVPPVEMYSGSFWNRMRKPLPLRTQ) lie on the Cytoplasmic side of the membrane. A helical transmembrane segment spans residues 45-65 (VIRFTVVFVIVSFILAVALQI). Residues 66-89 (THERMPDPKVTKPLPDLGFELLTK) are Extracellular-facing. A helical membrane pass occupies residues 90 to 110 (ISFLSVVTDVLIAFLSSLSFF). At 111–165 (TLWKLYLLHRHCVGSGEPELPCNIPGVSRFFLSVWLCKENCRIELRNVHTIAWIR) the chain is on the cytoplasmic side. A helical membrane pass occupies residues 166-186 (FITSYALLLLFRSLVIVMTSM). Residues 187–205 (PTPVDKCQNPPKIENPVKN) lie on the Extracellular side of the membrane. Residues 206–226 (VILTVLTAGGGSIHCGDLMYS) form a helical membrane-spanning segment. Residues 227-251 (GHTVILTLHLMFHWIYGAMVHWSFR) are Cytoplasmic-facing. Catalysis depends on residues H228, H271, and D275. A helical transmembrane segment spans residues 252–272 (PVVTVVAIFGYYCIVASRSHY). Topologically, residues 273–275 (TDD) are extracellular. A helical transmembrane segment spans residues 276-296 (VLVAIYLTIATFIAVGHNADG). Residues 297 to 355 (APWQLQLFIRWLPCCGANSREVTEDSQPVMVAFKSEAVDELRERDDSAGLSCEVSTNEV) lie on the Cytoplasmic side of the membrane.

The protein belongs to the sphingomyelin synthase family.

It localises to the membrane. Functionally, bidirectional lipid inositolphosphotransferase capable of converting phosphatidylinositol (PI) and ceramide to inositol-phosphorylceramide (IPC) and diacylglycerol (DAG) and vice versa. Direction is dependent on the relative concentrations of DAG and ceramide as phosphoinositol acceptors. Does not function strictly as a SM synthase. Essential for viability of the pathogenic bloodstream stage of this human protozoan parasite and, consequently, can be considered as potential drug target. This Trypanosoma brucei brucei (strain 927/4 GUTat10.1) protein is Phosphatidylinositol:ceramide inositolphosphotransferase.